Here is a 227-residue protein sequence, read N- to C-terminus: Inner membrane lipoprotein SadB (227 aa).

The signal sequence occupies residues 1-21 (MHKNGKFIPLLALGFTFFLSG). Cysteine 22 is lipidated: N-palmitoyl cysteine. Cysteine 22 carries S-diacylglycerol cysteine lipidation. Positions 31 to 68 (VEEMKEQQKEQETKINLLEKQQKEQEAKINLLEKQQAT) form a coiled coil.

In terms of assembly, homotrimer.

It is found in the cell inner membrane. Functionally, required for proper surface expression of the autotransporter adhesin SadA. Could be directly involved in the biogenesis of functionally active SadA. The sequence is that of Inner membrane lipoprotein SadB from Salmonella typhimurium (strain LT2 / SGSC1412 / ATCC 700720).